A 122-amino-acid polypeptide reads, in one-letter code: Phospholipase A2 nigroviriditoxin basic subunit B (122 aa).

Intrachain disulfides connect cysteine 26–cysteine 115, cysteine 28–cysteine 44, cysteine 43–cysteine 95, cysteine 49–cysteine 122, cysteine 50–cysteine 88, cysteine 57–cysteine 81, and cysteine 75–cysteine 86. Residues tyrosine 27, glycine 29, and glycine 31 each coordinate Ca(2+). Histidine 47 is a catalytic residue. Ca(2+) is bound at residue aspartate 48. Residue aspartate 89 is part of the active site.

The protein belongs to the phospholipase A2 family. Group II subfamily. D49 sub-subfamily. Nigroviriditoxin is a heterodimer of an acidic subunit A and a basic subunit B. Ca(2+) is required as a cofactor. Expressed by the venom gland.

It is found in the secreted. The catalysed reaction is a 1,2-diacyl-sn-glycero-3-phosphocholine + H2O = a 1-acyl-sn-glycero-3-phosphocholine + a fatty acid + H(+). Its function is as follows. Heterodimer A-B: Nigroviriditoxin possesses phospholipase A2 (PLA2) activity. It consists of a non-covalent association of a basic PLA2 subunit B with a non-enzymatic subunit A. Subunit B: Snake venom phospholipase A2 (PLA2) that induces myonecrosis in mice. PLA2 catalyzes the calcium-dependent hydrolysis of the 2-acyl groups in 3-sn-phosphoglycerides. This is Phospholipase A2 nigroviriditoxin basic subunit B from Bothriechis nigroviridis (Black-speckled palm pit viper).